Reading from the N-terminus, the 383-residue chain is Major fimbrium subunit FimA type Ib (383 aa).

Positions 1-18 (MKKTKFFLLGLAALAMTA) are cleaved as a signal peptide. Cys-19 carries N-palmitoyl cysteine lipidation. Cys-19 carries the S-diacylglycerol cysteine lipid modification. Residues 19-46 (CNKDNEAEPVTEGNATISVVLKTSNSNR) constitute a propeptide that is removed on maturation. The interval 374–383 (WVLVGQNATW) is important for oligomerization and fimbrium assembly.

Belongs to the bacteroidetes fimbrillin superfamily. FimA/Mfa1 family. In terms of assembly, fimbriae are composed of a major, structural subunit (FimA) and the minor components FimC, FimD and FimE. Head-to-tail oligomerization of FimA molecules mediates assembly of the fimbrium stalk, while the minor components probably form the fimbrium tip. Linear, head-to-tail oligomerization of FimA is mediated by a conformation change, facilitating the insertion of a C-terminal beta-strand into a groove in the N-terminal domain of the following subunit. Post-translationally, synthesized as palmitoylated lipoprotein precursor. Efficient export to the outer membrane and integration into fimbriae requires lipidation and subsequent proteolytic removal of the lipidated propeptide.

It localises to the fimbrium. It is found in the cell outer membrane. Functionally, structural subunit of the major fimbriae. These long, filamentous pili are attached to the cell surface; they mediate biofilm formation, adhesion onto host cells and onto other bacteria that are part of the oral microbiome. They play an important role in the invasion of periodontal tissues. Fimbriae and their constituents are major virulence factors. FimA proteins from different strains have highly divergent sequences, and this has been used for classification. The sequence-based classification correlates with pathogenicity. This chain is Major fimbrium subunit FimA type Ib (fimA), found in Porphyromonas gingivalis (Bacteroides gingivalis).